The following is a 941-amino-acid chain: Isoleucine--tRNA ligase (941 aa).

Residues 58–68 (PYANGNIHIGH) carry the 'HIGH' region motif. Glu564 lines the L-isoleucyl-5'-AMP pocket. The 'KMSKS' region motif lies at 605-609 (KMSKS). Lys608 provides a ligand contact to ATP. Zn(2+) contacts are provided by Cys904, Cys907, Cys924, and Cys927.

It belongs to the class-I aminoacyl-tRNA synthetase family. IleS type 1 subfamily. In terms of assembly, monomer. Requires Zn(2+) as cofactor.

Its subcellular location is the cytoplasm. The enzyme catalyses tRNA(Ile) + L-isoleucine + ATP = L-isoleucyl-tRNA(Ile) + AMP + diphosphate. Catalyzes the attachment of isoleucine to tRNA(Ile). As IleRS can inadvertently accommodate and process structurally similar amino acids such as valine, to avoid such errors it has two additional distinct tRNA(Ile)-dependent editing activities. One activity is designated as 'pretransfer' editing and involves the hydrolysis of activated Val-AMP. The other activity is designated 'posttransfer' editing and involves deacylation of mischarged Val-tRNA(Ile). In Buchnera aphidicola subsp. Cinara cedri (strain Cc), this protein is Isoleucine--tRNA ligase.